A 200-amino-acid polypeptide reads, in one-letter code: Small ribosomal subunit protein uS4 (200 aa).

In terms of domain architecture, S4 RNA-binding spans 92–155 (SRLDAVVYSL…QNLDIIKESV (64 aa)).

The protein belongs to the universal ribosomal protein uS4 family. Part of the 30S ribosomal subunit. Contacts protein S5. The interaction surface between S4 and S5 is involved in control of translational fidelity.

Its function is as follows. One of the primary rRNA binding proteins, it binds directly to 16S rRNA where it nucleates assembly of the body of the 30S subunit. Functionally, with S5 and S12 plays an important role in translational accuracy. This chain is Small ribosomal subunit protein uS4, found in Staphylococcus haemolyticus (strain JCSC1435).